The chain runs to 778 residues: Endonuclease MutS2 (778 aa).

328-335 is an ATP binding site; sequence GPNTGGKT. The Smr domain maps to 702-777; it reads LDLRGKRYEE…GSGATIVTFK (76 aa).

Belongs to the DNA mismatch repair MutS family. MutS2 subfamily. Homodimer. Binds to stalled ribosomes, contacting rRNA.

In terms of biological role, endonuclease that is involved in the suppression of homologous recombination and thus may have a key role in the control of bacterial genetic diversity. Acts as a ribosome collision sensor, splitting the ribosome into its 2 subunits. Detects stalled/collided 70S ribosomes which it binds and splits by an ATP-hydrolysis driven conformational change. Acts upstream of the ribosome quality control system (RQC), a ribosome-associated complex that mediates the extraction of incompletely synthesized nascent chains from stalled ribosomes and their subsequent degradation. Probably generates substrates for RQC. The protein is Endonuclease MutS2 of Streptococcus pneumoniae serotype 19F (strain G54).